The sequence spans 510 residues: Probable inositol 3-phosphate synthase isozyme 3 (510 aa).

Belongs to the myo-inositol 1-phosphate synthase family. The cofactor is NAD(+). As to expression, expressed in siliques, leaves, roots, seed endosperm, but not in embryos. Highest expression in roots. Confined to vascular tissue and hydathodes of leaves.

The protein resides in the cytoplasm. The catalysed reaction is D-glucose 6-phosphate = 1D-myo-inositol 3-phosphate. The protein operates within polyol metabolism; myo-inositol biosynthesis; myo-inositol from D-glucose 6-phosphate: step 1/2. Key enzyme in myo-inositol biosynthesis pathway that catalyzes the conversion of glucose 6-phosphate to 1-myo-inositol 1-phosphate in a NAD-dependent manner. This chain is Probable inositol 3-phosphate synthase isozyme 3 (IPS3), found in Arabidopsis thaliana (Mouse-ear cress).